A 760-amino-acid chain; its full sequence is 5-methyltetrahydropteroyltriglutamate--homocysteine methyltransferase (760 aa).

5-methyltetrahydropteroyltri-L-glutamate is bound by residues 17-20 (RELK) and Lys113. L-homocysteine-binding positions include 433–435 (IGS) and Glu486. L-methionine-binding positions include 433–435 (IGS) and Glu486. Residues 517–518 (RC) and Trp563 contribute to the 5-methyltetrahydropteroyltri-L-glutamate site. Residue Asp601 coordinates L-homocysteine. Asp601 contacts L-methionine. Glu607 lines the 5-methyltetrahydropteroyltri-L-glutamate pocket. Zn(2+) is bound by residues His643, Cys645, and Glu667. His696 serves as the catalytic Proton donor. Cys728 lines the Zn(2+) pocket.

The protein belongs to the vitamin-B12 independent methionine synthase family. The cofactor is Zn(2+).

The catalysed reaction is 5-methyltetrahydropteroyltri-L-glutamate + L-homocysteine = tetrahydropteroyltri-L-glutamate + L-methionine. Its pathway is amino-acid biosynthesis; L-methionine biosynthesis via de novo pathway; L-methionine from L-homocysteine (MetE route): step 1/1. Catalyzes the transfer of a methyl group from 5-methyltetrahydrofolate to homocysteine resulting in methionine formation. This Chromobacterium violaceum (strain ATCC 12472 / DSM 30191 / JCM 1249 / CCUG 213 / NBRC 12614 / NCIMB 9131 / NCTC 9757 / MK) protein is 5-methyltetrahydropteroyltriglutamate--homocysteine methyltransferase.